The following is a 480-amino-acid chain: Serralysin (480 aa).

Zn(2+) is bound at residue His-181. The active site involves Glu-182. His-185 and His-191 together coordinate Zn(2+). Ca(2+) is bound by residues Arg-260, Asp-263, Asp-292, Gly-294, Gly-295, Asp-297, Thr-334, and Glu-336. Hemolysin-type calcium-binding repeat units follow at residues 339–356 and 357–374; these read IGGS…ANTL and KGGA…ADNL.

The protein belongs to the peptidase M10B family. Zn(2+) serves as cofactor. Ca(2+) is required as a cofactor.

The protein resides in the secreted. The enzyme catalyses Preferential cleavage of bonds with hydrophobic residues in P1'.. This Photorhabdus laumondii subsp. laumondii (strain DSM 15139 / CIP 105565 / TT01) (Photorhabdus luminescens subsp. laumondii) protein is Serralysin (prtA).